The following is a 437-amino-acid chain: MRNTELVQWFRQSTPYVNMHREKTFVIMLDGNAIAHPNFINITNDISLLHSLGIKLVIVFGARCQIDELLAKNQMSSTYHKHIRITDSKTLEVVKQAVGGLHYDIFSRLSLRLPNSPVLNVVSSNAVLAQPLGVIDGVDYGLSGKIRRINIEAIQQQLAQDAIVVIGPIAPSVTGEMFNLPFEEIATQIAIKLKADKLIGFCDQQGILDSEGNVLSDLHPREAKRYLTQFIESGQYHHSAARFLQAAIEACHAGIKRSHLLSYKEDGSLLQELFSRDGIGTQLSEESSENIRLATSFDIPGLLNLIRPLEEQGILVKRSREQLEMEISNYTIIERDGIVIACAALNHYPQEKMAEMACVAVHPDYRDSSRGDVLLEAIKRRAYKLQVEKLFVLTTRTTQWFQERGFVLSTTDDLPKEKREHYNYQRMSKILILDLGQ.

One can recognise an N-acetyltransferase domain in the interval 289 to 429; sequence ENIRLATSFD…EHYNYQRMSK (141 aa).

It belongs to the acetyltransferase family. ArgA subfamily.

The protein localises to the cytoplasm. The enzyme catalyses L-glutamate + acetyl-CoA = N-acetyl-L-glutamate + CoA + H(+). It participates in amino-acid biosynthesis; L-arginine biosynthesis; N(2)-acetyl-L-ornithine from L-glutamate: step 1/4. In Actinobacillus pleuropneumoniae serotype 7 (strain AP76), this protein is Amino-acid acetyltransferase.